The primary structure comprises 1440 residues: Gag-Pol polyprotein (1440 aa).

Glycine 2 carries N-myristoyl glycine; by host lipidation. An interaction with Gp41 region spans residues 7-31 (VLSGGKLDAWEKIRLRPGGKKKYRL). An interaction with host CALM1 region spans residues 8–43 (LSGGKLDAWEKIRLRPGGKKKYRLKHLVWASRELER). An interaction with host AP3D1 region spans residues 12-19 (KLDAWEKI). The tract at residues 14–33 (DAWEKIRLRPGGKKKYRLKH) is interaction with membrane phosphatidylinositol 4,5-bisphosphate and RNA. Residues 16-22 (WEKIRLR) carry the Nuclear export signal motif. The Nuclear localization signal motif lies at 26 to 32 (KKKYRLK). The interval 73–77 (EEIKS) is interaction with membrane phosphatidylinositol 4,5-bisphosphate. Phosphotyrosine; by host is present on tyrosine 138. The segment at 195–233 (NIVGGHQAAMQMLKDTINEEAADWDRVHPVHAGPIPPGQ) is interaction with human PPIA/CYPA and NUP153. The interval 283–369 (YSPVSILDIR…GGPSHKARVL (87 aa)) is dimerization/Multimerization of capsid protein p24. 2 CCHC-type zinc fingers span residues 396-413 (IKCF…NCRA) and 417-434 (KGCW…DCTE). Residues 494-498 (PQITL) form a dimerization of protease region. The Peptidase A2 domain occupies 513 to 582 (KEALLDTGAD…TPVNIIGRNM (70 aa)). Aspartate 518 acts as the For protease activity; shared with dimeric partner in catalysis. Dimerization of protease stretches follow at residues 542 to 548 (GIGGFIK) and 581 to 593 (NMLT…LNFP). In terms of domain architecture, Reverse transcriptase spans 636–826 (EGKILKIGPE…PPFLWMGYEL (191 aa)). 3 residues coordinate Mg(2+): aspartate 702, aspartate 777, and aspartate 778. An RT 'primer grip' region spans residues 819-827 (FLWMGYELH). Residues 990–1006 (WEAWWTEYWQATWIPEW) carry the Tryptophan repeat motif motif. One can recognise an RNase H type-1 domain in the interval 1026-1149 (IVGAETFYVD…VDKLVSSGIR (124 aa)). Mg(2+) contacts are provided by aspartate 1035, glutamate 1070, aspartate 1090, and aspartate 1141. An Integrase-type zinc finger spans residues 1155 to 1196 (DGIDKAQEEHEKYHSNWRAMASDFNLPPIVAKEIVASCDKCQ). The Zn(2+) site is built by histidine 1164, histidine 1168, cysteine 1192, and cysteine 1195. The Integrase catalytic domain maps to 1206 to 1356 (VDCSPGIWQL…SAGERIIDMI (151 aa)). The Mg(2+) site is built by aspartate 1216, aspartate 1268, and glutamate 1304. Residues 1375–1422 (FRVYYRDNRDPIWKGPAKLLWKGEGAVVIQDNSDIKVVPRRKAKIIRD) constitute a DNA-binding region (integrase-type).

As to quaternary structure, homotrimer; further assembles as hexamers of trimers. Interacts with gp41 (via C-terminus). Interacts with host CALM1; this interaction induces a conformational change in the Matrix protein, triggering exposure of the myristate group. Interacts with host AP3D1; this interaction allows the polyprotein trafficking to multivesicular bodies during virus assembly. Part of the pre-integration complex (PIC) which is composed of viral genome, matrix protein, Vpr and integrase. In terms of assembly, homodimer; the homodimer further multimerizes as homohexamers or homopentamers. Interacts with human PPIA/CYPA; This interaction stabilizes the capsid. Interacts with human NUP153. Interacts with host PDZD8; this interaction stabilizes the capsid. Interacts with monkey TRIM5; this interaction destabilizes the capsid. Homodimer, whose active site consists of two apposed aspartic acid residues. As to quaternary structure, heterodimer of p66 RT and p51 RT (RT p66/p51). Heterodimerization of RT is essential for DNA polymerase activity. The overall folding of the subdomains is similar in p66 RT and p51 RT but the spatial arrangements of the subdomains are dramatically different. In terms of assembly, homotetramer; may further associate as a homohexadecamer. Part of the pre-integration complex (PIC) which is composed of viral genome, matrix protein, Vpr and integrase. Interacts with human SMARCB1/INI1 and human PSIP1/LEDGF isoform 1. Interacts with human KPNA3; this interaction might play a role in nuclear import of the pre-integration complex. Interacts with human NUP153; this interaction might play a role in nuclear import of the pre-integration complex. Mg(2+) serves as cofactor. In terms of processing, specific enzymatic cleavages by the viral protease yield mature proteins. The protease is released by autocatalytic cleavage. The polyprotein is cleaved during and after budding, this process is termed maturation. Proteolytic cleavage of p66 RT removes the RNase H domain to yield the p51 RT subunit. Nucleocapsid protein p7 might be further cleaved after virus entry. Tyrosine phosphorylated presumably in the virion by a host kinase. Phosphorylation is apparently not a major regulator of membrane association. Post-translationally, phosphorylated possibly by host MAPK1; this phosphorylation is necessary for Pin1-mediated virion uncoating. In terms of processing, methylated by host PRMT6, impairing its function by reducing RNA annealing and the initiation of reverse transcription.

Its subcellular location is the host cell membrane. It localises to the host endosome. The protein resides in the host multivesicular body. The protein localises to the virion membrane. It is found in the host nucleus. Its subcellular location is the host cytoplasm. It localises to the virion. The catalysed reaction is Specific for a P1 residue that is hydrophobic, and P1' variable, but often Pro.. It catalyses the reaction Endohydrolysis of RNA in RNA/DNA hybrids. Three different cleavage modes: 1. sequence-specific internal cleavage of RNA. Human immunodeficiency virus type 1 and Moloney murine leukemia virus enzymes prefer to cleave the RNA strand one nucleotide away from the RNA-DNA junction. 2. RNA 5'-end directed cleavage 13-19 nucleotides from the RNA end. 3. DNA 3'-end directed cleavage 15-20 nucleotides away from the primer terminus.. The enzyme catalyses 3'-end directed exonucleolytic cleavage of viral RNA-DNA hybrid.. It carries out the reaction DNA(n) + a 2'-deoxyribonucleoside 5'-triphosphate = DNA(n+1) + diphosphate. With respect to regulation, protease: The viral protease is inhibited by many synthetic protease inhibitors (PIs), such as amprenavir, atazanavir, indinavir, loprinavir, nelfinavir, ritonavir and saquinavir. Use of protease inhibitors in tritherapy regimens permit more ambitious therapeutic strategies. Reverse transcriptase/ribonuclease H: RT can be inhibited either by nucleoside RT inhibitors (NRTIs) or by non nucleoside RT inhibitors (NNRTIs). NRTIs act as chain terminators, whereas NNRTIs inhibit DNA polymerization by binding a small hydrophobic pocket near the RT active site and inducing an allosteric change in this region. Classical NRTIs are abacavir, adefovir (PMEA), didanosine (ddI), lamivudine (3TC), stavudine (d4T), tenofovir (PMPA), zalcitabine (ddC), and zidovudine (AZT). Classical NNRTIs are atevirdine (BHAP U-87201E), delavirdine, efavirenz (DMP-266), emivirine (I-EBU), and nevirapine (BI-RG-587). The tritherapies used as a basic effective treatment of AIDS associate two NRTIs and one NNRTI. Mediates, with Gag polyprotein, the essential events in virion assembly, including binding the plasma membrane, making the protein-protein interactions necessary to create spherical particles, recruiting the viral Env proteins, and packaging the genomic RNA via direct interactions with the RNA packaging sequence (Psi). Gag-Pol polyprotein may regulate its own translation, by the binding genomic RNA in the 5'-UTR. At low concentration, the polyprotein would promote translation, whereas at high concentration, the polyprotein would encapsidate genomic RNA and then shut off translation. Functionally, targets the polyprotein to the plasma membrane via a multipartite membrane-binding signal, that includes its myristoylated N-terminus. Matrix protein is part of the pre-integration complex. Implicated in the release from host cell mediated by Vpu. Binds to RNA. In terms of biological role, forms the conical core that encapsulates the genomic RNA-nucleocapsid complex in the virion. Most core are conical, with only 7% tubular. The core is constituted by capsid protein hexamer subunits. The core is disassembled soon after virion entry. Host restriction factors such as TRIM5-alpha or TRIMCyp bind retroviral capsids and cause premature capsid disassembly, leading to blocks in reverse transcription. Capsid restriction by TRIM5 is one of the factors which restricts HIV-1 to the human species. Host PIN1 apparently facilitates the virion uncoating. On the other hand, interactions with PDZD8 or CYPA stabilize the capsid. Its function is as follows. Encapsulates and protects viral dimeric unspliced genomic RNA (gRNA). Binds these RNAs through its zinc fingers. Acts as a nucleic acid chaperone which is involved in rearangement of nucleic acid secondary structure during gRNA retrotranscription. Also facilitates template switch leading to recombination. As part of the polyprotein, participates in gRNA dimerization, packaging, tRNA incorporation and virion assembly. Aspartyl protease that mediates proteolytic cleavages of Gag and Gag-Pol polyproteins during or shortly after the release of the virion from the plasma membrane. Cleavages take place as an ordered, step-wise cascade to yield mature proteins. This process is called maturation. Displays maximal activity during the budding process just prior to particle release from the cell. Also cleaves Nef and Vif, probably concomitantly with viral structural proteins on maturation of virus particles. Hydrolyzes host EIF4GI and PABP1 in order to shut off the capped cellular mRNA translation. The resulting inhibition of cellular protein synthesis serves to ensure maximal viral gene expression and to evade host immune response. Also mediates cleavage of host YTHDF3. Mediates cleavage of host CARD8, thereby activating the CARD8 inflammasome, leading to the clearance of latent HIV-1 in patient CD4(+) T-cells after viral reactivation; in contrast, HIV-1 can evade CARD8-sensing when its protease remains inactive in infected cells prior to viral budding. Functionally, multifunctional enzyme that converts the viral RNA genome into dsDNA in the cytoplasm, shortly after virus entry into the cell. This enzyme displays a DNA polymerase activity that can copy either DNA or RNA templates, and a ribonuclease H (RNase H) activity that cleaves the RNA strand of RNA-DNA heteroduplexes in a partially processive 3' to 5' endonucleasic mode. Conversion of viral genomic RNA into dsDNA requires many steps. A tRNA(3)-Lys binds to the primer-binding site (PBS) situated at the 5'-end of the viral RNA. RT uses the 3' end of the tRNA primer to perform a short round of RNA-dependent minus-strand DNA synthesis. The reading proceeds through the U5 region and ends after the repeated (R) region which is present at both ends of viral RNA. The portion of the RNA-DNA heteroduplex is digested by the RNase H, resulting in a ssDNA product attached to the tRNA primer. This ssDNA/tRNA hybridizes with the identical R region situated at the 3' end of viral RNA. This template exchange, known as minus-strand DNA strong stop transfer, can be either intra- or intermolecular. RT uses the 3' end of this newly synthesized short ssDNA to perform the RNA-dependent minus-strand DNA synthesis of the whole template. RNase H digests the RNA template except for two polypurine tracts (PPTs) situated at the 5'-end and near the center of the genome. It is not clear if both polymerase and RNase H activities are simultaneous. RNase H probably can proceed both in a polymerase-dependent (RNA cut into small fragments by the same RT performing DNA synthesis) and a polymerase-independent mode (cleavage of remaining RNA fragments by free RTs). Secondly, RT performs DNA-directed plus-strand DNA synthesis using the PPTs that have not been removed by RNase H as primers. PPTs and tRNA primers are then removed by RNase H. The 3' and 5' ssDNA PBS regions hybridize to form a circular dsDNA intermediate. Strand displacement synthesis by RT to the PBS and PPT ends produces a blunt ended, linear dsDNA copy of the viral genome that includes long terminal repeats (LTRs) at both ends. In terms of biological role, catalyzes viral DNA integration into the host chromosome, by performing a series of DNA cutting and joining reactions. This enzyme activity takes place after virion entry into a cell and reverse transcription of the RNA genome in dsDNA. The first step in the integration process is 3' processing. This step requires a complex comprising the viral genome, matrix protein, Vpr and integrase. This complex is called the pre-integration complex (PIC). The integrase protein removes 2 nucleotides from each 3' end of the viral DNA, leaving recessed CA OH's at the 3' ends. In the second step, the PIC enters cell nucleus. This process is mediated through integrase and Vpr proteins, and allows the virus to infect a non dividing cell. This ability to enter the nucleus is specific of lentiviruses, other retroviruses cannot and rely on cell division to access cell chromosomes. In the third step, termed strand transfer, the integrase protein joins the previously processed 3' ends to the 5' ends of strands of target cellular DNA at the site of integration. The 5'-ends are produced by integrase-catalyzed staggered cuts, 5 bp apart. A Y-shaped, gapped, recombination intermediate results, with the 5'-ends of the viral DNA strands and the 3' ends of target DNA strands remaining unjoined, flanking a gap of 5 bp. The last step is viral DNA integration into host chromosome. This involves host DNA repair synthesis in which the 5 bp gaps between the unjoined strands are filled in and then ligated. Since this process occurs at both cuts flanking the HIV genome, a 5 bp duplication of host DNA is produced at the ends of HIV-1 integration. Alternatively, Integrase may catalyze the excision of viral DNA just after strand transfer, this is termed disintegration. The polypeptide is Gag-Pol polyprotein (gag-pol) (Human immunodeficiency virus type 1 group M subtype A (isolate MAL) (HIV-1)).